The sequence spans 372 residues: Glutamate 5-kinase (372 aa).

Lys14 provides a ligand contact to ATP. Ser54, Asp141, and Asn153 together coordinate substrate. Residues 173 to 174 (TD) and 215 to 221 (TGGMATK) contribute to the ATP site. The 79-residue stretch at 280 to 358 (KGKLVLDVGA…DEIESLLGYD (79 aa)) folds into the PUA domain.

This sequence belongs to the glutamate 5-kinase family.

The protein localises to the cytoplasm. The enzyme catalyses L-glutamate + ATP = L-glutamyl 5-phosphate + ADP. The protein operates within amino-acid biosynthesis; L-proline biosynthesis; L-glutamate 5-semialdehyde from L-glutamate: step 1/2. Catalyzes the transfer of a phosphate group to glutamate to form L-glutamate 5-phosphate. The sequence is that of Glutamate 5-kinase from Shewanella woodyi (strain ATCC 51908 / MS32).